Here is a 1008-residue protein sequence, read N- to C-terminus: CRAL-TRIO domain-containing protein C23B6.04c (1008 aa).

3 disordered regions span residues 1-247, 284-306, and 374-514; these read MKDS…AKSE, DGRD…DVDS, and QKVV…ASAK. Positions 79-110 are enriched in polar residues; sequence TVHTKTGSSSSPASKMRNTVNLQHIQAANQKT. Basic and acidic residues-rich tracts occupy residues 111–131 and 170–187; these read RNAE…KAEA and MNDK…DSKL. 4 stretches are compositionally biased toward polar residues: residues 374-389, 397-432, 467-478, and 495-505; these read QKVV…STDN, DHPS…TSPK, GGNSVTAPSTPS, and GRSSTAPSTPN. Phosphoserine is present on residues serine 525 and serine 559. Positions 675–828 constitute a CRAL-TRIO domain; sequence EIQEENATGK…NFGGSLHFEY (154 aa). The tract at residues 883 to 982 is disordered; it reads SLTNRSSSPT…KSGSGVSETP (100 aa). A compositionally biased stretch (low complexity) spans 885–899; the sequence is TNRSSSPTVTPTVNT. Serine 888 and serine 890 each carry phosphoserine. A compositionally biased stretch (basic and acidic residues) spans 914-931; sequence SPQKRRVENPKPVVKDEG.

The protein localises to the cell membrane. The sequence is that of CRAL-TRIO domain-containing protein C23B6.04c from Schizosaccharomyces pombe (strain 972 / ATCC 24843) (Fission yeast).